The primary structure comprises 169 residues: Large ribosomal subunit protein uL15 (169 aa).

Residues 20 to 56 (GRGIGSGKGKTGGRGVKGQKARSGVSIKGFEGGQMPL) are disordered. Residues 21–35 (RGIGSGKGKTGGRGV) show a composition bias toward gly residues.

It belongs to the universal ribosomal protein uL15 family. As to quaternary structure, part of the 50S ribosomal subunit.

Its function is as follows. Binds to the 23S rRNA. This chain is Large ribosomal subunit protein uL15, found in Methylorubrum extorquens (strain CM4 / NCIMB 13688) (Methylobacterium extorquens).